Reading from the N-terminus, the 124-residue chain is Histone H2A, embryonic (124 aa).

A compositionally biased stretch (basic residues) spans 1-18 (MSGRGKSGKARTKAKTRS). The disordered stretch occupies residues 1–21 (MSGRGKSGKARTKAKTRSSRA). Serine 2 carries the N-acetylserine modification. At serine 2 the chain carries Phosphoserine. Glutamine 104 bears the N5-methylglutamine mark. Residue lysine 119 forms a Glycyl lysine isopeptide (Lys-Gly) (interchain with G-Cter in ubiquitin) linkage.

The protein belongs to the histone H2A family. The nucleosome is a histone octamer containing two molecules each of H2A, H2B, H3 and H4 assembled in one H3-H4 heterotetramer and two H2A-H2B heterodimers. The octamer wraps approximately 147 bp of DNA. Post-translationally, monoubiquitination of Lys-119 gives a specific tag for epigenetic transcriptional repression. In terms of processing, phosphorylation of Ser-2 directly represses transcription.

It is found in the nucleus. The protein localises to the chromosome. Core component of nucleosome. Nucleosomes wrap and compact DNA into chromatin, limiting DNA accessibility to the cellular machineries which require DNA as a template. Histones thereby play a central role in transcription regulation, DNA repair, DNA replication and chromosomal stability. DNA accessibility is regulated via a complex set of post-translational modifications of histones, also called histone code, and nucleosome remodeling. This chain is Histone H2A, embryonic, found in Psammechinus miliaris (Green sea urchin).